The sequence spans 99 residues: Aspartyl/glutamyl-tRNA(Asn/Gln) amidotransferase subunit C (99 aa).

It belongs to the GatC family. In terms of assembly, heterotrimer of A, B and C subunits.

It catalyses the reaction L-glutamyl-tRNA(Gln) + L-glutamine + ATP + H2O = L-glutaminyl-tRNA(Gln) + L-glutamate + ADP + phosphate + H(+). The catalysed reaction is L-aspartyl-tRNA(Asn) + L-glutamine + ATP + H2O = L-asparaginyl-tRNA(Asn) + L-glutamate + ADP + phosphate + 2 H(+). Allows the formation of correctly charged Asn-tRNA(Asn) or Gln-tRNA(Gln) through the transamidation of misacylated Asp-tRNA(Asn) or Glu-tRNA(Gln) in organisms which lack either or both of asparaginyl-tRNA or glutaminyl-tRNA synthetases. The reaction takes place in the presence of glutamine and ATP through an activated phospho-Asp-tRNA(Asn) or phospho-Glu-tRNA(Gln). The chain is Aspartyl/glutamyl-tRNA(Asn/Gln) amidotransferase subunit C from Rhodococcus opacus (strain B4).